The sequence spans 102 residues: Small ribosomal subunit protein bS20 (102 aa).

It belongs to the bacterial ribosomal protein bS20 family.

In terms of biological role, binds directly to 16S ribosomal RNA. In Gloeobacter violaceus (strain ATCC 29082 / PCC 7421), this protein is Small ribosomal subunit protein bS20.